The chain runs to 264 residues: uncharacterized protein (264 aa).

The helical transmembrane segment at 7–27 (LTLGICLVLLIILIVGYVIMT) threads the bilayer.

It belongs to the staphylococcal tandem lipoprotein family.

Its subcellular location is the cell membrane. This is an uncharacterized protein from Staphylococcus aureus (strain N315).